Here is a 337-residue protein sequence, read N- to C-terminus: Inositol 2-dehydrogenase (337 aa).

It belongs to the Gfo/Idh/MocA family. As to quaternary structure, homotetramer.

It catalyses the reaction myo-inositol + NAD(+) = scyllo-inosose + NADH + H(+). Functionally, involved in the oxidation of myo-inositol (MI) to 2-keto-myo-inositol (2KMI or 2-inosose). In Burkholderia ambifaria (strain MC40-6), this protein is Inositol 2-dehydrogenase.